The following is a 394-amino-acid chain: Ceramide glucosyltransferase (394 aa).

The Lumenal segment spans residues 1–10; that stretch reads MALLDLALEG. The helical transmembrane segment at 11-32 threads the bilayer; the sequence is MAVFGFVLFLVLWLMHFMAIIY. Topologically, residues 33–195 are cytoplasmic; it reads TRLHLNKKAT…QVYFGTSHPR (163 aa). Position 92 (Asp92) is a short sequence motif, D1. Lys117 carries the N6-acetyllysine modification. A short sequence motif (D2) is located at residue Asp144. A helical transmembrane segment spans residues 196–215; it reads YYISANVTGFKCVTGMSCLM. The Lumenal segment spans residues 216–287; it reads RKDVLDQAGG…KLRINMLPAT (72 aa). Residue Asp236 is a short sequence motif, D3. Asp236 (proton acceptor) is an active-site residue. The short motif at 272–276 is the (Q/R)XXRW element; sequence RMIRW. The chain crosses the membrane as a helical span at residues 288–304; it reads IICEPISECFVASLIIG. Residues 305–309 lie on the Cytoplasmic side of the membrane; it reads WAAHH. Residues 310–328 traverse the membrane as a helical segment; it reads VFRWDIMVFFMCHCLAWFI. Residues 329–348 lie on the Lumenal side of the membrane; it reads FDYIQLRGVQGGTLCFSKLD. A helical membrane pass occupies residues 349–369; it reads YAVAWFIRESMTIYIFLSALW. Residues 370 to 394 are Cytoplasmic-facing; that stretch reads DPTISWRTGRYRLRCGGTAEEILDV.

Belongs to the glycosyltransferase 2 family. In terms of assembly, interacts with RTN1; regulates the ceramide glucosyltransferase activity of UGCG. As to expression, found in all tissues examined.

The protein resides in the golgi apparatus membrane. The enzyme catalyses an N-acylsphing-4-enine + UDP-alpha-D-glucose = a beta-D-glucosyl-(1&lt;-&gt;1')-N-acylsphing-4-enine + UDP + H(+). The catalysed reaction is UDP-alpha-D-xylose + an N-acylsphing-4-enine = a beta-D-xylosyl-(1&lt;-&gt;1')-N-acylsphing-4-enine + UDP + H(+). It catalyses the reaction N-(9Z-octadecenoyl)-sphing-4-enine + UDP-alpha-D-xylose = beta-D-xylosyl-(1&lt;-&gt;1')-N-(9Z-octadecenoyl)-sphing-4-enine + UDP + H(+). It participates in lipid metabolism; sphingolipid metabolism. Functionally, participates in the initial step of the glucosylceramide-based glycosphingolipid/GSL synthetic pathway at the cytosolic surface of the Golgi. Catalyzes the transfer of glucose from UDP-glucose to ceramide to produce glucosylceramide/GlcCer (such as beta-D-glucosyl-(1&lt;-&gt;1')-N-acylsphing-4-enine). GlcCer is the core component of glycosphingolipids/GSLs, amphipathic molecules consisting of a ceramide lipid moiety embedded in the outer leaflet of the membrane, linked to one of hundreds of different externally oriented oligosaccharide structures. Glycosphingolipids are essential components of membrane microdomains that mediate membrane trafficking and signal transduction, implicated in many fundamental cellular processes, including growth, differentiation, migration, morphogenesis, cell-to-cell and cell-to-matrix interactions. They are required for instance in the proper development and functioning of the nervous system. As an example of their role in signal transduction, they regulate the leptin receptor/LEPR in the leptin-mediated signaling pathway. They also play an important role in the establishment of the skin barrier regulating keratinocyte differentiation and the proper assembly of the cornified envelope. The biosynthesis of GSLs is also required for the proper intestinal endocytic uptake of nutritional lipids. Catalyzes the synthesis of xylosylceramide/XylCer (such as beta-D-xylosyl-(1&lt;-&gt;1')-N-acylsphing-4-enine) using UDP-Xyl as xylose donor. This Homo sapiens (Human) protein is Ceramide glucosyltransferase.